The sequence spans 234 residues: Sugar fermentation stimulation protein homolog (234 aa).

The protein belongs to the SfsA family.

The sequence is that of Sugar fermentation stimulation protein homolog from Shewanella baltica (strain OS155 / ATCC BAA-1091).